A 989-amino-acid polypeptide reads, in one-letter code: Translation initiation factor IF-2 (989 aa).

Disordered regions lie at residues 43-219 and 234-379; these read KRRR…LQAR and EARR…GGAR. Residues 72–87 show a composition bias toward polar residues; the sequence is NTPNKDTAVTQTATKN. The segment covering 105-146 has biased composition (low complexity); that stretch reads PKPVAAEATAQETSKAAPAAAQPVAEKEAAAPASAEAAKSAA. The span at 149 to 159 shows a compositional bias: basic and acidic residues; that stretch reads VTDRGAKKTTE. The span at 160 to 171 shows a compositional bias: polar residues; that stretch reads KNGANASGNRPS. Basic and acidic residues predominate over residues 234–293; it reads EARRREDRLKQEADLEEQRRIEEKRRLEAEAKVEAEKQAALKEKEKAEAKARAKAEKEAK. Positions 294-303 are enriched in low complexity; the sequence is AAQAKTAGAA. A compositionally biased stretch (basic and acidic residues) spans 342 to 361; that stretch reads PRREAPRPAMRDRKGEDRRQ. One can recognise a tr-type G domain in the interval 489–659; it reads SRPPVVTIMG…LLQAEMLELK (171 aa). The interval 498-505 is G1; sequence GHVDHGKT. 498 to 505 is a binding site for GTP; that stretch reads GHVDHGKT. Residues 523–527 form a G2 region; the sequence is GITQH. The tract at residues 545–548 is G3; the sequence is DTPG. GTP contacts are provided by residues 545–549 and 599–602; these read DTPGH and NKMD. The G4 stretch occupies residues 599–602; sequence NKMD. Residues 635 to 637 form a G5 region; that stretch reads SAA.

This sequence belongs to the TRAFAC class translation factor GTPase superfamily. Classic translation factor GTPase family. IF-2 subfamily.

It localises to the cytoplasm. In terms of biological role, one of the essential components for the initiation of protein synthesis. Protects formylmethionyl-tRNA from spontaneous hydrolysis and promotes its binding to the 30S ribosomal subunits. Also involved in the hydrolysis of GTP during the formation of the 70S ribosomal complex. The sequence is that of Translation initiation factor IF-2 from Zymomonas mobilis subsp. mobilis (strain ATCC 31821 / ZM4 / CP4).